Here is a 459-residue protein sequence, read N- to C-terminus: MEDDRAQVDLGIAADIDEMNPPPPPSVQQKQPKKRFLGRQSAAAGKSSSSSSNSTSQPAGANTSIEDSGAIQVAQPRRAPRMLNQVPDSILHDAALNEAIALLPSNYSFEIHKTIHRIRTLDAKRVALQMPEGLLLFATTISDILTQFCPGIETLIMGDVTYGACCIDDYTARAMGCDLLVHYAHSCLIPVDVTKIKTLYVFVDISIDTSHLLATLERNFAPGKSIAMVGTIQFNATIHGVRSTLQKAGYEVIIPQIAPLSKGEILGCTSPNLSQFLTSSGKQVDMILYLGDGRFHLESIMIHNPSIPAYRYDPYSRKLTHETYGHEEMQDVRRSAIRQAKTAKKWGLILGSLGRQGNPNTLGLIEEKLKANGTPFVNFCLSEIFPGKLAMMSDVECWVQVACPRLSIDWGYAFPRPLLTPYEALIALEEKEDWGKGAYPMDYYGREGLGRTKPAAMEV.

A disordered region spans residues 1–68 (MEDDRAQVDL…AGANTSIEDS (68 aa)). Residues 41–61 (SAAAGKSSSSSSNSTSQPAGA) are compositionally biased toward low complexity. The [4Fe-4S] cluster site is built by cysteine 165, cysteine 268, and cysteine 403.

The protein belongs to the DPH1/DPH2 family. DPH1 subfamily. In terms of assembly, component of the 2-(3-amino-3-carboxypropyl)histidine synthase complex composed of dph-1, dph-2, dph-3 and a NADH-dependent reductase, predominantly cbr-1. [4Fe-4S] cluster serves as cofactor.

The protein resides in the cytoplasm. It carries out the reaction L-histidyl-[translation elongation factor 2] + S-adenosyl-L-methionine = 2-[(3S)-amino-3-carboxypropyl]-L-histidyl-[translation elongation factor 2] + S-methyl-5'-thioadenosine + H(+). It participates in protein modification; peptidyl-diphthamide biosynthesis. Catalyzes the first step of diphthamide biosynthesis, a post-translational modification of histidine which occurs in elongation factor 2. Dph-1 and dph-2 transfer a 3-amino-3-carboxypropyl (ACP) group from S-adenosyl-L-methionine (SAM) to a histidine residue, the reaction is assisted by a reduction system comprising dph-3 and a NADH-dependent reductase, predominantly cbr-1. This chain is 2-(3-amino-3-carboxypropyl)histidine synthase subunit 1 (dph-1), found in Neurospora crassa (strain ATCC 24698 / 74-OR23-1A / CBS 708.71 / DSM 1257 / FGSC 987).